Reading from the N-terminus, the 474-residue chain is Cysteine--tRNA ligase (474 aa).

Residue Cys-34 participates in Zn(2+) binding. The 'HIGH' region motif lies at 36 to 46; the sequence is PTVYDYAHIGN. Zn(2+) contacts are provided by Cys-219, His-244, and Glu-248. The 'KMSKS' region motif lies at 276 to 280; sequence KMSKS. Lys-279 contacts ATP.

The protein belongs to the class-I aminoacyl-tRNA synthetase family. As to quaternary structure, monomer. It depends on Zn(2+) as a cofactor.

The protein localises to the cytoplasm. It catalyses the reaction tRNA(Cys) + L-cysteine + ATP = L-cysteinyl-tRNA(Cys) + AMP + diphosphate. This chain is Cysteine--tRNA ligase (cysS), found in Chlamydia pneumoniae (Chlamydophila pneumoniae).